Reading from the N-terminus, the 710-residue chain is Probable inactive DNA (cytosine-5)-methyltransferase DRM3 (710 aa).

The segment at 1–21 is disordered; sequence MADMRRRNGSGGSSNHERNEQ. Residues 52 to 92 form the UBA 1 domain; that stretch reads SGSNVKSLLIEMGFCPTLVQKAIDENGQDDFELLLEILTKS. Over residues 167–184 the composition is skewed to acidic residues; it reads ESEDSLDGAEINEEDEDV. The interval 167–192 is disordered; it reads ESEDSLDGAEINEEDEDVTPVTARGP. A UBA 2 domain is found at 198 to 242; that stretch reads QLFETMDKTLRLLEMGFSNDEISMAIEKIGTKGQISVLAESIVTG. The tract at residues 282–360 is disordered; that stretch reads AQKEDGGGGS…MGDSSSFMET (79 aa). Residues 339–350 are compositionally biased toward basic and acidic residues; the sequence is YDDRGKRLRPED. The SAM-dependent MTase DRM-type domain maps to 379 to 710; the sequence is QPRLSQSLGP…RVTKRVRDMM (332 aa).

The protein belongs to the class I-like SAM-binding methyltransferase superfamily. DRM-methyltransferase family. As to quaternary structure, interacts with Pol V.

The protein resides in the nucleus. In terms of biological role, catalytically inactive DNA methyltransferase that acts as regulatory factor for DRM2-mediated DNA methylation. Required for maintenance of non-CpG DNA methylation. Required for normal establishment and maintenance of RNA-directed DNA methylation (RdDM) and accumulation of specific repeat-associated small interfering RNAs (siRNAs). Required for nucleolus organizer region (NOR) nuclear organization during interphase. Acts downstream of the production of siRNAs. May promote RNA polymerase V (Pol V) transcriptional elongation or assist in the stabilization of Pol V transcripts. The protein is Probable inactive DNA (cytosine-5)-methyltransferase DRM3 of Arabidopsis thaliana (Mouse-ear cress).